The chain runs to 255 residues: Ribonuclease HII (255 aa).

In terms of domain architecture, RNase H type-2 spans 72 to 255; that stretch reads AIICGIDEVG…KSFEPIKSLL (184 aa). A divalent metal cation-binding residues include aspartate 78, glutamate 79, and aspartate 170.

It belongs to the RNase HII family. The cofactor is Mn(2+). Mg(2+) is required as a cofactor.

It localises to the cytoplasm. The catalysed reaction is Endonucleolytic cleavage to 5'-phosphomonoester.. Its function is as follows. Endonuclease that specifically degrades the RNA of RNA-DNA hybrids. This chain is Ribonuclease HII, found in Staphylococcus aureus (strain Mu3 / ATCC 700698).